We begin with the raw amino-acid sequence, 286 residues long: Acetylglutamate kinase (286 aa).

Substrate contacts are provided by residues 70-71 (GG), R92, and N184.

This sequence belongs to the acetylglutamate kinase family. ArgB subfamily.

It is found in the cytoplasm. It catalyses the reaction N-acetyl-L-glutamate + ATP = N-acetyl-L-glutamyl 5-phosphate + ADP. It participates in amino-acid biosynthesis; L-arginine biosynthesis; N(2)-acetyl-L-ornithine from L-glutamate: step 2/4. Functionally, catalyzes the ATP-dependent phosphorylation of N-acetyl-L-glutamate. The sequence is that of Acetylglutamate kinase from Ruegeria sp. (strain TM1040) (Silicibacter sp.).